The sequence spans 364 residues: Ribosomal RNA large subunit methyltransferase M (364 aa).

S-adenosyl-L-methionine-binding positions include serine 198, 231–234 (APGG), aspartate 250, aspartate 270, and aspartate 286. Lysine 315 (proton acceptor) is an active-site residue.

It belongs to the class I-like SAM-binding methyltransferase superfamily. RNA methyltransferase RlmE family. RlmM subfamily. Monomer.

The protein resides in the cytoplasm. It carries out the reaction cytidine(2498) in 23S rRNA + S-adenosyl-L-methionine = 2'-O-methylcytidine(2498) in 23S rRNA + S-adenosyl-L-homocysteine + H(+). In terms of biological role, catalyzes the 2'-O-methylation at nucleotide C2498 in 23S rRNA. The sequence is that of Ribosomal RNA large subunit methyltransferase M from Thauera aminoaromatica.